Consider the following 401-residue polypeptide: Ribosomal RNA dihydrouridine synthase (401 aa).

FAD-binding residues include A15, D34, N35, R41, G47, N52, V132, E371, and F384.

It belongs to the BaiN/RdsA family. RdsA subfamily. Requires FAD as cofactor.

The catalysed reaction is a 5,6-dihydrouridine in mRNA + NAD(+) = a uridine in mRNA + NADH + H(+). In terms of biological role, catalyzes the synthesis of 5,6-dihydrouridine (D) at position 2449 in 23S rRNA. The polypeptide is Ribosomal RNA dihydrouridine synthase (Haemophilus influenzae (strain ATCC 51907 / DSM 11121 / KW20 / Rd)).